A 315-amino-acid chain; its full sequence is Putative pyruvate, phosphate dikinase regulatory protein (315 aa).

Residues 1-32 (MGPFGARASPEAGQVVKQPLTDDPQESLAQGE) form a disordered region. Residue 189–196 (GVSRTSKT) participates in ADP binding.

Belongs to the pyruvate, phosphate/water dikinase regulatory protein family. PDRP subfamily.

It carries out the reaction N(tele)-phospho-L-histidyl/L-threonyl-[pyruvate, phosphate dikinase] + ADP = N(tele)-phospho-L-histidyl/O-phospho-L-threonyl-[pyruvate, phosphate dikinase] + AMP + H(+). It catalyses the reaction N(tele)-phospho-L-histidyl/O-phospho-L-threonyl-[pyruvate, phosphate dikinase] + phosphate + H(+) = N(tele)-phospho-L-histidyl/L-threonyl-[pyruvate, phosphate dikinase] + diphosphate. Its function is as follows. Bifunctional serine/threonine kinase and phosphorylase involved in the regulation of the pyruvate, phosphate dikinase (PPDK) by catalyzing its phosphorylation/dephosphorylation. The protein is Putative pyruvate, phosphate dikinase regulatory protein of Caulobacter vibrioides (strain ATCC 19089 / CIP 103742 / CB 15) (Caulobacter crescentus).